The chain runs to 79 residues: uncharacterized protein (79 aa).

The 52-residue stretch at 3 to 54 folds into the TM2 domain; sequence SKKNKIVAALLAFFFGGLGIHKFYLGRVGQGILYILFCWTGIPSIIAFIEFI. A run of 2 helical transmembrane segments spans residues 8-28 and 37-57; these read IVAALLAFFFGGLGIHKFYLG and ILFCWTGIPSIIAFIEFIIFL.

It is found in the cell membrane. This is an uncharacterized protein from Bacillus subtilis (strain 168).